Consider the following 67-residue polypeptide: Conotoxin ArMLKM-01 (67 aa).

An N-terminal signal peptide occupies residues 1–24; it reads MLKMEVVLFTFLVLFPLSTLQLET. A propeptide spanning residues 25-51 is cleaved from the precursor; sequence DQPVERYVENKQDLNPDESRNFMLPIV. 3 cysteine pairs are disulfide-bonded: C54–C65, C55–C63, and C58–C66.

The protein belongs to the conotoxin M superfamily. As to expression, expressed by the venom duct.

Its subcellular location is the secreted. The sequence is that of Conotoxin ArMLKM-01 from Conus arenatus (Sand-dusted cone).